Consider the following 477-residue polypeptide: Oleate hydroxylase FAH12 (477 aa).

The segment at 26–48 is disordered; sequence YESSAAVSPAESPRTSASSTSLS. Residues 27 to 48 show a composition bias toward low complexity; it reads ESSAAVSPAESPRTSASSTSLS. 2 helical membrane passes run 101–118 and 133–153; these read AYVLRDLLCLSTTFYLFH and FVLWSIYTVLQGLFATGLWVI. Positions 155 to 159 match the Histidine box-1 motif; sequence HECGH. A helical membrane pass occupies residues 167–187; the sequence is FISDLTGWVIHSALLVPYFSW. The Histidine box-2 signature appears at 191–195; sequence HSAHH. 3 consecutive transmembrane segments (helical) span residues 234-254, 299-319, and 327-347; these read PIYTALHLVGKQLIGWPSYLM, YIVLSDIGLGLAIAALVYLGN, and AVWYFLPYLWVNHWLVAITFL.

Belongs to the fatty acid desaturase type 1 family.

It localises to the microsome membrane. It catalyses the reaction (9Z)-octadecenoate + AH2 + O2 = (12R)-hydroxy-(9Z)-octadecenoate + A + H2O. Its pathway is lipid metabolism; monounsaturated fatty acid biosynthesis. In terms of biological role, oleate hydroxylase involved in the biosynthesis of ricinoleate (12-hydroxy-cis-9-octadecenoate), that is present at high levels in C.purpurea sclerotium tissue. Exhibits delta(12) hydroxylase activity on 16C and 18C monounsaturated fatty acids (i.e. oleic and palmitoleic acids), and, to a lower extent, gamma(3) hydroxylase activity on ricinoleate. This is Oleate hydroxylase FAH12 from Claviceps purpurea (Ergot fungus).